The following is a 254-amino-acid chain: Pyridoxine 5'-phosphate synthase (254 aa).

Position 12 (N12) interacts with 3-amino-2-oxopropyl phosphate. Residue 14–15 coordinates 1-deoxy-D-xylulose 5-phosphate; the sequence is DH. R23 contacts 3-amino-2-oxopropyl phosphate. Residue H48 is the Proton acceptor of the active site. R50 and H55 together coordinate 1-deoxy-D-xylulose 5-phosphate. Residue E75 is the Proton acceptor of the active site. Position 105 (T105) interacts with 1-deoxy-D-xylulose 5-phosphate. Residue H199 is the Proton donor of the active site. 3-amino-2-oxopropyl phosphate is bound by residues G200 and 221–222; that span reads GF.

Belongs to the PNP synthase family. Homooctamer; tetramer of dimers.

It localises to the cytoplasm. It catalyses the reaction 3-amino-2-oxopropyl phosphate + 1-deoxy-D-xylulose 5-phosphate = pyridoxine 5'-phosphate + phosphate + 2 H2O + H(+). It functions in the pathway cofactor biosynthesis; pyridoxine 5'-phosphate biosynthesis; pyridoxine 5'-phosphate from D-erythrose 4-phosphate: step 5/5. Functionally, catalyzes the complicated ring closure reaction between the two acyclic compounds 1-deoxy-D-xylulose-5-phosphate (DXP) and 3-amino-2-oxopropyl phosphate (1-amino-acetone-3-phosphate or AAP) to form pyridoxine 5'-phosphate (PNP) and inorganic phosphate. The chain is Pyridoxine 5'-phosphate synthase from Rhodopseudomonas palustris (strain HaA2).